Reading from the N-terminus, the 96-residue chain is Nucleoid-associated protein CCA_00330 (96 aa).

The protein belongs to the YbaB/EbfC family. Homodimer.

Its subcellular location is the cytoplasm. The protein resides in the nucleoid. In terms of biological role, binds to DNA and alters its conformation. May be involved in regulation of gene expression, nucleoid organization and DNA protection. The sequence is that of Nucleoid-associated protein CCA_00330 from Chlamydia caviae (strain ATCC VR-813 / DSM 19441 / 03DC25 / GPIC) (Chlamydophila caviae).